The primary structure comprises 434 residues: Probable glucuronosyltransferase Os02g0520750 (434 aa).

The Cytoplasmic segment spans residues 1-10 (MVGARAGRVP). A helical; Signal-anchor for type II membrane protein transmembrane segment spans residues 11-31 (AAAAAAAAVLIVAACVFSSLA). Residues 32–434 (GAAAAAEVVG…GPVADLKPWK (403 aa)) are Lumenal-facing. Residues N160 and N421 are each glycosylated (N-linked (GlcNAc...) asparagine).

Belongs to the glycosyltransferase 47 family.

It localises to the golgi apparatus membrane. Involved in the synthesis of glucuronoxylan hemicellulose in secondary cell walls. In Oryza sativa subsp. japonica (Rice), this protein is Probable glucuronosyltransferase Os02g0520750.